Reading from the N-terminus, the 340-residue chain is Heat-inducible transcription repressor HrcA (340 aa).

The protein belongs to the HrcA family.

Its function is as follows. Negative regulator of class I heat shock genes (grpE-dnaK-dnaJ and groELS operons). Prevents heat-shock induction of these operons. The polypeptide is Heat-inducible transcription repressor HrcA (Burkholderia cenocepacia (strain ATCC BAA-245 / DSM 16553 / LMG 16656 / NCTC 13227 / J2315 / CF5610) (Burkholderia cepacia (strain J2315))).